The chain runs to 287 residues: 4-hydroxybenzoate octaprenyltransferase (287 aa).

6 helical membrane passes run 41 to 61 (WPLL…GCAM), 89 to 109 (WEAV…ILPL), 133 to 153 (FFAI…PMAF), 158 to 178 (DTVP…SVAY), 202 to 224 (FGRF…YVWI), and 266 to 286 (HNNW…LLAG).

This sequence belongs to the UbiA prenyltransferase family. Requires Mg(2+) as cofactor.

The protein resides in the cell inner membrane. The catalysed reaction is all-trans-octaprenyl diphosphate + 4-hydroxybenzoate = 4-hydroxy-3-(all-trans-octaprenyl)benzoate + diphosphate. Its pathway is cofactor biosynthesis; ubiquinone biosynthesis. Functionally, catalyzes the prenylation of para-hydroxybenzoate (PHB) with an all-trans polyprenyl group. Mediates the second step in the final reaction sequence of ubiquinone-8 (UQ-8) biosynthesis, which is the condensation of the polyisoprenoid side chain with PHB, generating the first membrane-bound Q intermediate 3-octaprenyl-4-hydroxybenzoate. The polypeptide is 4-hydroxybenzoate octaprenyltransferase (Burkholderia orbicola (strain MC0-3)).